The primary structure comprises 518 residues: Glutamate--cysteine ligase (518 aa).

The protein belongs to the glutamate--cysteine ligase type 1 family. Type 1 subfamily.

It catalyses the reaction L-cysteine + L-glutamate + ATP = gamma-L-glutamyl-L-cysteine + ADP + phosphate + H(+). It functions in the pathway sulfur metabolism; glutathione biosynthesis; glutathione from L-cysteine and L-glutamate: step 1/2. The protein is Glutamate--cysteine ligase of Klebsiella pneumoniae (strain 342).